We begin with the raw amino-acid sequence, 309 residues long: Foldase protein PrsA 2 (309 aa).

Positions 1–22 are cleaved as a signal peptide; it reads MKQMNKLITGVVTLATVVTLSA. The N-palmitoyl cysteine moiety is linked to residue C23. The S-diacylglycerol cysteine moiety is linked to residue C23. Positions 146-241 constitute a PpiC domain; sequence TPTMTAEIMQ…RTYHIIKVTK (96 aa).

It belongs to the PrsA family.

It localises to the cell membrane. The enzyme catalyses [protein]-peptidylproline (omega=180) = [protein]-peptidylproline (omega=0). Plays a major role in protein secretion by helping the post-translocational extracellular folding of several secreted proteins. The protein is Foldase protein PrsA 2 (prsA2) of Streptococcus pyogenes serotype M3 (strain ATCC BAA-595 / MGAS315).